Here is a 1012-residue protein sequence, read N- to C-terminus: Structural polyprotein (1012 aa).

D30 is an a divalent metal cation binding site. One can recognise a Peptidase S50 domain in the interval 513-755; sequence ADKGYEVVAN…AGRQYHLAMA (243 aa). S652 serves as the catalytic Nucleophile. K692 is a catalytic residue. Residues 970–1012 are disordered; that stretch reads MEMKHRNPRRAPPKPKPKPNAPTQRPPGRLGRWIRTVSDEDLE. The segment covering 975 to 986 has biased composition (basic residues); sequence RNPRRAPPKPKP. Residues 1003–1012 are interaction with VP1 protein; it reads IRTVSDEDLE.

Homotrimer. A central divalent metal stabilizes the VP2 trimer. Interacts with host ITGA4/ITGB1. As to quaternary structure, homodimer. Interacts (via C-terminus) with VP1 in the cytoplasm. Interacts with VP2. Specific enzymatic cleavages yield mature proteins. The capsid assembly seems to be regulated by polyprotein processing. The protease VP4 cleaves itself off the polyprotein, thus releasing pre-VP2 and VP3 within the infected cell. During capsid assembly, the C-terminus of pre-VP2 is further processed by VP4, giving rise to VP2, the external capsid protein and three small peptides that all stay closely associated with the capsid.

The protein localises to the virion. The protein resides in the host cytoplasm. Functionally, capsid protein VP2 self assembles to form an icosahedral capsid with a T=13 symmetry, about 70 nm in diameter, and consisting of 260 VP2 trimers. The capsid encapsulates the genomic dsRNA. VP2 is also involved in attachment and entry into the host cell by interacting with host ITGA4/ITGB1. Its function is as follows. The precursor of VP2 plays an important role in capsid assembly. First, pre-VP2 and VP2 oligomers assemble to form a procapsid. Then, the pre-VP2 intermediates may be processed into VP2 proteins by proteolytic cleavage mediated by VP4 to obtain the mature virion. The final capsid is composed of pentamers and hexamers but VP2 has a natural tendency to assemble into all-pentameric structures. Therefore pre-VP2 may be required to allow formation of the hexameric structures. In terms of biological role, protease VP4 is a serine protease that cleaves the polyprotein into its final products. Pre-VP2 is first partially cleaved, and may be completely processed by VP4 upon capsid maturation. Capsid protein VP3 plays a key role in virion assembly by providing a scaffold for the capsid made of VP2. May self-assemble to form a T=4-like icosahedral inner-capsid composed of at least 180 trimers. Plays a role in genomic RNA packaging by recruiting VP1 into the capsid and interacting with the dsRNA genome segments to form a ribonucleoprotein complex. Additionally, the interaction of the VP3 C-terminal tail with VP1 removes the inherent structural blockade of the polymerase active site. Thus, VP3 can also function as a transcriptional activator. Functionally, structural peptide 1 is a small peptide derived from pre-VP2 C-terminus. It destabilizes and perforates cell membranes, suggesting a role during entry. Its function is as follows. Structural peptide 2 is a small peptide derived from pVP2 C-terminus. It is not essential for the virus viability, but viral growth is affected when missing. In terms of biological role, structural peptide 3 is a small peptide derived from pVP2 C-terminus. It is not essential for the virus viability, but viral growth is affected when missing. Structural peptide 4 is a small peptide derived from pVP2 C-terminus. It is essential for the virus viability. The sequence is that of Structural polyprotein from Avian infectious bursal disease virus (strain E) (IBDV).